Consider the following 272-residue polypeptide: Ribosomal RNA small subunit methyltransferase A (272 aa).

6 residues coordinate S-adenosyl-L-methionine: N18, L20, G45, E66, D91, and N113.

This sequence belongs to the class I-like SAM-binding methyltransferase superfamily. rRNA adenine N(6)-methyltransferase family. RsmA subfamily.

The protein localises to the cytoplasm. The enzyme catalyses adenosine(1518)/adenosine(1519) in 16S rRNA + 4 S-adenosyl-L-methionine = N(6)-dimethyladenosine(1518)/N(6)-dimethyladenosine(1519) in 16S rRNA + 4 S-adenosyl-L-homocysteine + 4 H(+). Its function is as follows. Specifically dimethylates two adjacent adenosines (A1518 and A1519) in the loop of a conserved hairpin near the 3'-end of 16S rRNA in the 30S particle. May play a critical role in biogenesis of 30S subunits. The protein is Ribosomal RNA small subunit methyltransferase A of Yersinia pseudotuberculosis serotype O:1b (strain IP 31758).